Reading from the N-terminus, the 418-residue chain is Gamma-glutamyl phosphate reductase (418 aa).

This sequence belongs to the gamma-glutamyl phosphate reductase family.

It is found in the cytoplasm. The catalysed reaction is L-glutamate 5-semialdehyde + phosphate + NADP(+) = L-glutamyl 5-phosphate + NADPH + H(+). Its pathway is amino-acid biosynthesis; L-proline biosynthesis; L-glutamate 5-semialdehyde from L-glutamate: step 2/2. Its function is as follows. Catalyzes the NADPH-dependent reduction of L-glutamate 5-phosphate into L-glutamate 5-semialdehyde and phosphate. The product spontaneously undergoes cyclization to form 1-pyrroline-5-carboxylate. This chain is Gamma-glutamyl phosphate reductase, found in Geobacter sulfurreducens (strain ATCC 51573 / DSM 12127 / PCA).